The chain runs to 284 residues: MPELPEVETVRRGLELVTLKQPIVDVEVLLARSIALPKEPQAFIEHLRDRAIEQWQRRGKYLLATLDDGSRLVIHLRMSGQLLWLTTPQPPCPHTRVRWFFPTRAELRFVDQRTFGRCWWLPPDCRVAEAIPALATLAPEPLSEAFTVAFLAARLAHCRRSIKTALLDQSIVAGMGNIYADESLFLSGLHPTQSAHTLTPEQVQRLHGVICQVLREGIAAGGTTIRTFMSPAGVNGHYGGQAWVYGRKGEACRVCGTTIERLRLAGRSSHYCPQCQPLSSAIGK.

Catalysis depends on Pro2, which acts as the Schiff-base intermediate with DNA. Glu3 functions as the Proton donor in the catalytic mechanism. Lys60 serves as the catalytic Proton donor; for beta-elimination activity. 2 residues coordinate DNA: His94 and Arg113. An FPG-type zinc finger spans residues 243 to 277; the sequence is WVYGRKGEACRVCGTTIERLRLAGRSSHYCPQCQP. Arg267 functions as the Proton donor; for delta-elimination activity in the catalytic mechanism.

The protein belongs to the FPG family. In terms of assembly, monomer. Zn(2+) is required as a cofactor.

The catalysed reaction is Hydrolysis of DNA containing ring-opened 7-methylguanine residues, releasing 2,6-diamino-4-hydroxy-5-(N-methyl)formamidopyrimidine.. It catalyses the reaction 2'-deoxyribonucleotide-(2'-deoxyribose 5'-phosphate)-2'-deoxyribonucleotide-DNA = a 3'-end 2'-deoxyribonucleotide-(2,3-dehydro-2,3-deoxyribose 5'-phosphate)-DNA + a 5'-end 5'-phospho-2'-deoxyribonucleoside-DNA + H(+). Its function is as follows. Involved in base excision repair of DNA damaged by oxidation or by mutagenic agents. Acts as a DNA glycosylase that recognizes and removes damaged bases. Has a preference for oxidized purines, such as 7,8-dihydro-8-oxoguanine (8-oxoG). Has AP (apurinic/apyrimidinic) lyase activity and introduces nicks in the DNA strand. Cleaves the DNA backbone by beta-delta elimination to generate a single-strand break at the site of the removed base with both 3'- and 5'-phosphates. This is Formamidopyrimidine-DNA glycosylase (mutM) from Thermosynechococcus vestitus (strain NIES-2133 / IAM M-273 / BP-1).